A 377-amino-acid chain; its full sequence is Caspase-4 (377 aa).

Residues 1 to 59 (MAEDKHNKNPLKMLESLGKELISGLLDDFVEKNVLKLEEEEKKKIYDAKLQDKARVLVD) form a required for LPS-binding region. The propeptide occupies 1 to 80 (MAEDKHNKNP…VFVQTFLNID (80 aa)). The CARD domain occupies 1–91 (MAEDKHNKNP…NSTSIKAPEE (91 aa)). Ser-83 bears the Phosphoserine mark. Catalysis depends on residues His-210 and Cys-258. The propeptide occupies 271–289 (SPPALADSFSQSSENLEED).

This sequence belongs to the peptidase C14A family. In terms of assembly, heterotetramer that consists of two anti-parallel arranged heterodimers, each one formed by a 20 kDa (Caspase-4 subunit p20) and a 10 kDa (Caspase-4 subunit p10) subunit. Upon direct LPS-binding, forms large homooligomers, resulting in its activation. These oligomers are often referred to as 'non-canonical inflammasomes'. In its precursor form, interacts with TMEM214; this interaction is required for association with the endoplasmic reticulum membrane. Interacts with CASP1. Interacts with NOD2. Interacts with Serpinb1a, Serpinb1b and Serpinb1c; these interactions regulate CASP4 activity. Heterotetramer that consists of two anti-parallel arranged heterodimers, each one formed by a 20 kDa (Caspase-4 subunit p20) and a 10 kDa (Caspase-4 subunit p10) subunit. In terms of processing, in response to activation signals, undergoes autoproteolytic cleavage and activation.

The protein localises to the cytoplasm. The protein resides in the cytosol. Its subcellular location is the endoplasmic reticulum membrane. It is found in the mitochondrion. It localises to the inflammasome. The protein localises to the secreted. The enzyme catalyses Strict requirement for Asp at the P1 position. It has a preferred cleavage sequence of Tyr-Val-Ala-Asp-|- but also cleaves at Asp-Glu-Val-Asp-|-.. With respect to regulation, activated by homooligomerization induced by direct binding to cytosolic LPS, in a TLR4-independent manner. In addition to LPS, CASP4/CASP11 may also be activated by oxidized phospholipid 1-palmitoyl-2-arachidonoyl- sn-glycero-3-phosphorylcholine, an oxidized phospholipid (oxPAPC), in dendritic cells, promoting adaptive immunity. The role of oxPAPC is however unclear and another report suggests that oxPAPC competes with LPS-binding and inhibits the non-canonical inflammasome in macrophages. Inflammatory caspase that acts as the effector of the non-canonical inflammasome by mediating lipopolysaccharide (LPS)-induced pyroptosis. Also indirectly activates the NLRP3 and NLRP6 inflammasomes. Acts as a thiol protease that cleaves a tetrapeptide after an Asp residue at position P1: catalyzes cleavage of CGAS, GSDMD and IL18. Effector of the non-canonical inflammasome independently of NLRP3 inflammasome and CASP1: the non-canonical inflammasome promotes pyroptosis through GSDMD cleavage without involving secretion of cytokine IL1B. In the non-canonical inflammasome, CASP4 is activated by direct binding to the lipid A moiety of LPS without the need of an upstream sensor. LPS-binding promotes CASP4 activation and CASP4-mediated cleavage of GSDMD and IL18, followed by IL18 secretion through the GSDMD pore, pyroptosis of infected cells and their extrusion into the gut lumen. Also indirectly promotes secretion of mature cytokines (IL1A and HMGB1) downstream of GSDMD-mediated pyroptosis via activation of the NLRP3 and NLRP6 inflammasomes. Involved in NLRP3-dependent CASP1 activation and IL1B secretion in response to non-canonical activators, such as UVB radiation or cholera enterotoxin. Involved in NLRP6 inflammasome-dependent activation in response to lipoteichoic acid (LTA), a cell-wall component of Gram-positive bacteria, which leads to CASP1 activation and IL1B secretion. Involved in LPS-induced IL6 secretion; this activity may not require caspase enzymatic activity. The non-canonical inflammasome is required for innate immunity to cytosolic, but not vacuolar, bacteria. Plays a crucial role in the restriction of S.typhimurium replication in colonic epithelial cells during infection. Pyroptosis limits bacterial replication, while cytokine secretion promotes the recruitment and activation of immune cells and triggers mucosal inflammation. May also act as an activator of adaptive immunity in dendritic cells, following activation by oxidized phospholipid 1-palmitoyl-2-arachidonoyl- sn-glycero-3-phosphorylcholine, an oxidized phospholipid (oxPAPC). Cleavage of GSDMD is not strictly dependent on the consensus cleavage site but depends on an exosite interface on CASP4 that recognizes and binds the Gasdermin-D, C-terminal (GSDMD-CT) part. Catalyzes cleavage and maturation of IL18; IL18 processing also depends of the exosite interface on CASP4. In contrast, it does not directly process IL1B. During non-canonical inflammasome activation, cuts CGAS and may play a role in the regulation of antiviral innate immune activation. This is Caspase-4 (CASP4) from Bos taurus (Bovine).